The sequence spans 939 residues: Tyrosine-protein kinase Shark (939 aa).

Residues 10 to 106 (WYHGNLSREA…GLPTKLTVPL (97 aa)) form the SH2 1 domain. ANK repeat units lie at residues 153–185 (DGQT…SSDS), 186–218 (FGCQ…GRNI), and 220–252 (NGYV…PRTS). The SH2 2 domain occupies 288–403 (WYHGTLTREE…GLPVSLKYPV (116 aa)). Disordered stretches follow at residues 410–446 (EVPS…QHPH) and 476–505 (ALFD…SLAG). Positions 496-505 (ESSVSGSLAG) are enriched in polar residues. Residues 662–921 (LVLDREIGHG…PTFVYLTEFF (260 aa)) enclose the Protein kinase domain. Residues 668-676 (IGHGEFGSV) and Lys698 contribute to the ATP site. The active-site Proton acceptor is Asp789. At Tyr927 the chain carries Phosphotyrosine.

The protein belongs to the protein kinase superfamily. Tyr protein kinase family. As to quaternary structure, interacts with drpr; this is required for the recruitment of drpr and glial cells to severed axons and for the phagocytosis of axonal debris by glial cells following axon injury. As to expression, gastrulation embryos show expression in ectodermal cells along the cephalic furrow and ventral midline. Proctodeum, stomodeum and their derived structures (foregut, atrium, pharynx, esophagus and hindgut) continue to show expression from stage 8-9 to late embryos. Other ectodermally derived structures (frontal sac, salivary gland and labium) and developing tracheal system also show expression.

Its subcellular location is the cytoplasm. The catalysed reaction is L-tyrosyl-[protein] + ATP = O-phospho-L-tyrosyl-[protein] + ADP + H(+). In terms of biological role, following axon injury, required for recruitment of drpr and glial cells to severed axons and for glial clearance of severed axons from the central nervous system. Together with Src42a and drpr, promotes the migration of macrophages to sites of wounding as part of a signaling cascade where Scr42a detects production of hydrogen peroxide at wound sites which triggers phosphorylation of drpr and subsequent recruitment and activation of shark. May be involved in signal transduction on the apical surface of ectodermal epithelial cells, regulating their polarity during invagination. Crumbs (crb) may be the intracellular signal. The chain is Tyrosine-protein kinase Shark from Drosophila melanogaster (Fruit fly).